The primary structure comprises 51 residues: Large ribosomal subunit protein eL39 (51 aa).

This sequence belongs to the eukaryotic ribosomal protein eL39 family.

The chain is Large ribosomal subunit protein eL39 from Methanosarcina acetivorans (strain ATCC 35395 / DSM 2834 / JCM 12185 / C2A).